A 552-amino-acid chain; its full sequence is Membrane protein insertase YidC (552 aa).

Transmembrane regions (helical) follow at residues V7–Q24, W364–A384, L434–V454, P473–P493, and P508–V528.

Belongs to the OXA1/ALB3/YidC family. Type 1 subfamily. As to quaternary structure, interacts with the Sec translocase complex via SecD. Specifically interacts with transmembrane segments of nascent integral membrane proteins during membrane integration.

It localises to the cell inner membrane. Its function is as follows. Required for the insertion and/or proper folding and/or complex formation of integral membrane proteins into the membrane. Involved in integration of membrane proteins that insert both dependently and independently of the Sec translocase complex, as well as at least some lipoproteins. Aids folding of multispanning membrane proteins. The sequence is that of Membrane protein insertase YidC from Burkholderia cenocepacia (strain HI2424).